Here is a 154-residue protein sequence, read N- to C-terminus: Endoribonuclease YbeY (154 aa).

Zn(2+)-binding residues include H120, H124, and H130.

It belongs to the endoribonuclease YbeY family. Requires Zn(2+) as cofactor.

The protein resides in the cytoplasm. Its function is as follows. Single strand-specific metallo-endoribonuclease involved in late-stage 70S ribosome quality control and in maturation of the 3' terminus of the 16S rRNA. The protein is Endoribonuclease YbeY of Oceanobacillus iheyensis (strain DSM 14371 / CIP 107618 / JCM 11309 / KCTC 3954 / HTE831).